The chain runs to 661 residues: Protein WHI3 (661 aa).

Over residues 14–31 (ASSSDNVVSSTTNTHNIS) the composition is skewed to low complexity. Positions 14–58 (ASSSDNVVSSTTNTHNISPSHRSSLNLNTTSHPHEASGRGSASGE) are disordered. Residues 32-44 (PSHRSSLNLNTTS) are compositionally biased toward polar residues. Ser-231 is subject to Phosphoserine. Low complexity-rich tracts occupy residues 237–272 (DPFS…SPQQ), 383–409 (NTSA…SASS), and 496–508 (KNNS…SNIT). Disordered stretches follow at residues 237 to 280 (DPFS…QVNS), 383 to 410 (NTSA…ASSQ), 469 to 508 (EHMY…SNIT), and 613 to 661 (SSKG…HIKN). Residues 538 to 625 (NTLYVGNLPS…GGIRLSFSKN (88 aa)) form the RRM domain. Residues 628 to 647 (GVRGPNSRRGGSGNPNPNVN) show a composition bias toward low complexity. Residues 648-661 (MLSSYNSNVGHIKN) are compositionally biased toward polar residues.

Involved in size control and cell cycle. This chain is Protein WHI3 (WHI3), found in Saccharomyces cerevisiae (strain ATCC 204508 / S288c) (Baker's yeast).